Reading from the N-terminus, the 714-residue chain is DNA ligase (714 aa).

NAD(+)-binding positions include 48-52 (DADYD), 97-98 (SL), and Glu129. The active-site N6-AMP-lysine intermediate is Lys131. NAD(+) is bound by residues Arg152, Glu189, Lys307, and Lys331. Zn(2+) is bound by residues Cys436, Cys439, Cys454, and Cys460. A BRCT domain is found at 637–714 (KQDTAVAGKT…TEDEWLALIG (78 aa)).

Belongs to the NAD-dependent DNA ligase family. LigA subfamily. Mg(2+) is required as a cofactor. Mn(2+) serves as cofactor.

The enzyme catalyses NAD(+) + (deoxyribonucleotide)n-3'-hydroxyl + 5'-phospho-(deoxyribonucleotide)m = (deoxyribonucleotide)n+m + AMP + beta-nicotinamide D-nucleotide.. Its function is as follows. DNA ligase that catalyzes the formation of phosphodiester linkages between 5'-phosphoryl and 3'-hydroxyl groups in double-stranded DNA using NAD as a coenzyme and as the energy source for the reaction. It is essential for DNA replication and repair of damaged DNA. This is DNA ligase from Rhodopseudomonas palustris (strain BisB5).